The primary structure comprises 205 residues: Protein N-terminal glutamine amidohydrolase (205 aa).

Catalysis depends on residues C20, H74, and D90.

The protein belongs to the NTAQ1 family. As to quaternary structure, monomer.

It catalyses the reaction N-terminal L-glutaminyl-[protein] + H2O = N-terminal L-glutamyl-[protein] + NH4(+). Mediates the side-chain deamidation of N-terminal glutamine residues to glutamate, an important step in N-end rule pathway of protein degradation. Conversion of the resulting N-terminal glutamine to glutamate renders the protein susceptible to arginylation, polyubiquitination and degradation as specified by the N-end rule. Does not act on substrates with internal or C-terminal glutamine and does not act on non-glutamine residues in any position. The chain is Protein N-terminal glutamine amidohydrolase (tun) from Drosophila melanogaster (Fruit fly).